The sequence spans 925 residues: TBC1 domain family member 2A (925 aa).

Methionine 1 carries the post-translational modification N-acetylmethionine. The disordered stretch occupies residues 1 to 41 (MEGAQESPAESGSSVPWSEEPAGSAKVPEVSLSEESEGCTR). Residues 1-171 (MEGAQESPAE…AGNGPALRLE (171 aa)) are interaction with CADH1. The 98-residue stretch at 47–144 (PPKLCGYLSK…WLQQLQMKRW (98 aa)) folds into the PH domain. Positions 231-278 (NKQTQGANHRPPGEDSPLIEETQREEQPSPPGPGAPGKDPANSLKSSL) are disordered. The interval 297–435 (SEGLMRNRTA…KVTQDFMKAP (139 aa)) is interaction with RAC1. Residues 302–475 (RNRTAQEKVL…LNSEIHQVTK (174 aa)) adopt a coiled-coil conformation. Residues 622-814 (GVPHEHRPRV…QVWDAFLYEG (193 aa)) enclose the Rab-GAP TBC domain. Positions 872 to 907 (MKQLRQLRAAHRERLEAELNELEQLKAEYLETRAAQ) form a coiled coil. A disordered region spans residues 904-925 (RAAQGPAVPEGSPSEDEGEAEP). A compositionally biased stretch (acidic residues) spans 916-925 (PSEDEGEAEP). Residue serine 917 is modified to Phosphoserine.

As to quaternary structure, interacts with activated RAC1 and CDH1.

The protein localises to the cytoplasm. The protein resides in the cytoplasmic vesicle. It is found in the cell junction. In terms of biological role, may act as a GTPase-activating protein for Rab family protein(s). Signal effector acting as a linker between RAC1 and RAB7A, leading to RAB7A inactivation and further inhibition of cadherin degradation. The chain is TBC1 domain family member 2A (TBC1D2) from Bos taurus (Bovine).